The chain runs to 465 residues: MTPVRMQHSLAGQTYAVPFIQPDLRREEAVQQMADALQYLQKVSGDIFSRISQQVEQSRSQVQAIGEKVSLAQAKIEKIKGSKKAIKVFSSAKYPAPGRLQEYGSIFTGAQDPGLQRRPRHRIQSKHRPLDERALQEKLKDFPVCVSTKPEPEDDAEEGLGGLPSNISSVSSLLLFNTTENLYKKYVFLDPLAGAVTKTHVMLGAETEEKLFDAPLSISKREQLEQQVPENYFYVPDLGQVPEIHVPSYLPDLPGIANDLMYSADLGPGIAPSAPGTIPELPTFHTEVAEPLKVDLQDGVLTPPPPPPPPPPAPEVLASAPPLPPSTAAPVGQGARQDDSSSSASPSVQGAPREVVDPSGGWATLLESIRQAGGIGKAKLRSMKERKLEKQQQKEQEQVRATSQGGHLMSDLFNKLVMRRKGISGKGPGAGEGPGGAFVRVSDSIPPLPPPQQPQAEEDEDDWES.

Positions 1–54 (MTPVRMQHSLAGQTYAVPFIQPDLRREEAVQQMADALQYLQKVSGDIFSRISQQ) are required for WASH complex assembly. The WHD1 stretch occupies residues 1-167 (MTPVRMQHSL…EGLGGLPSNI (167 aa)). Lys220 is covalently cross-linked (Glycyl lysine isopeptide (Lys-Gly) (interchain with G-Cter in ubiquitin)). 3 disordered regions span residues 297–359 (QDGV…VDPS), 376–407 (GKAK…QGGH), and 423–465 (ISGK…DWES). Residues 302-314 (TPPPPPPPPPPAP) show a composition bias toward pro residues. A VCA region spans residues 349 to 465 (QGAPREVVDP…AEEDEDDWES (117 aa)). The region spanning 361–383 (GWATLLESIRQAGGIGKAKLRSM) is the WH2 domain. Residues 382 to 398 (SMKERKLEKQQQKEQEQ) show a composition bias toward basic and acidic residues. A compositionally biased stretch (gly residues) spans 424–436 (SGKGPGAGEGPGG). Positions 456 to 465 (AEEDEDDWES) are enriched in acidic residues.

It belongs to the WASH1 family. Component of the WASH core complex also described as WASH regulatory complex (SHRC) composed of WASH (WASHC1, WASH2P or WASH3P), WASHC2 (WASHC2A or WASHC2C), WASHC3, WASHC4 and WASHC5. The WASH core complex associates via WASHC2 with the F-actin-capping protein dimer (formed by CAPZA1, CAPZA2 or CAPZA3 and CAPZB) in a transient or substoichiometric manner which was initially described as WASH complex. Interacts (via WHD1 region) with WASHC2C; the interaction is direct. Interacts with VPS35; mediates the association with the retromer CSC complex. Interacts with FKBP15. Interacts with alpha-tubulin. Interacts with BECN1; this interaction can be competed out by AMBRA1 binding. Interacts with BLOC1S2; may associate with the BLOC-1 complex. Interacts with tubulin gamma chain (TUBG1 or TUBG2). Interacts with EXOC1, EXOC4, EXOC8; in MMP14-positive endosomes in breast tumor cells; indicative for an association with the exocyst complex. Interacts with TBC1D23. Ubiquitinated at Lys-220 via 'Lys-63'-linked ubiquitin chains by the TRIM27:MAGEL2 E3 ubiquitin ligase complex, leading to promote endosomal F-actin assembly.

The protein localises to the early endosome membrane. It is found in the recycling endosome membrane. Its subcellular location is the late endosome. It localises to the cytoplasmic vesicle. The protein resides in the autophagosome. The protein localises to the cytoplasm. It is found in the cytoskeleton. Its subcellular location is the microtubule organizing center. It localises to the centrosome. The protein resides in the centriole. Functionally, acts as a component of the WASH core complex that functions as a nucleation-promoting factor (NPF) at the surface of endosomes, where it recruits and activates the Arp2/3 complex to induce actin polymerization, playing a key role in the fission of tubules that serve as transport intermediates during endosome sorting. Involved in endocytic trafficking of EGF. Involved in transferrin receptor recycling. Regulates the trafficking of endosomal alpha5beta1 integrin to the plasma membrane and involved in invasive cell migration. In T-cells involved in endosome-to-membrane recycling of receptors including T-cell receptor (TCR), CD28 and ITGAL; proposed to be implicated in T cell proliferation and effector function. In dendritic cells involved in endosome-to-membrane recycling of major histocompatibility complex (MHC) class II probably involving retromer and subsequently allowing antigen sampling, loading and presentation during T-cell activation. Involved in Arp2/3 complex-dependent actin assembly driving Salmonella typhimurium invasion independent of ruffling. Involved in the exocytosis of MMP14 leading to matrix remodeling during invasive migration and implicating late endosome-to-plasma membrane tubular connections and cooperation with the exocyst complex. Involved in negative regulation of autophagy independently from its role in endosomal sorting by inhibiting BECN1 ubiquitination to inactivate PIK3C3/Vps34 activity. In Homo sapiens (Human), this protein is WASH complex subunit 1.